The following is a 477-amino-acid chain: tRNA-2-methylthio-N(6)-dimethylallyladenosine synthase (477 aa).

Residues Lys-3–Glu-120 enclose the MTTase N-terminal domain. [4Fe-4S] cluster is bound by residues Cys-12, Cys-49, Cys-83, Cys-157, Cys-161, and Cys-164. The 233-residue stretch at Arg-143–Gln-375 folds into the Radical SAM core domain. The region spanning Arg-378–Arg-441 is the TRAM domain.

Belongs to the methylthiotransferase family. MiaB subfamily. In terms of assembly, monomer. [4Fe-4S] cluster serves as cofactor.

It is found in the cytoplasm. The enzyme catalyses N(6)-dimethylallyladenosine(37) in tRNA + (sulfur carrier)-SH + AH2 + 2 S-adenosyl-L-methionine = 2-methylsulfanyl-N(6)-dimethylallyladenosine(37) in tRNA + (sulfur carrier)-H + 5'-deoxyadenosine + L-methionine + A + S-adenosyl-L-homocysteine + 2 H(+). Catalyzes the methylthiolation of N6-(dimethylallyl)adenosine (i(6)A), leading to the formation of 2-methylthio-N6-(dimethylallyl)adenosine (ms(2)i(6)A) at position 37 in tRNAs that read codons beginning with uridine. This Aeromonas hydrophila subsp. hydrophila (strain ATCC 7966 / DSM 30187 / BCRC 13018 / CCUG 14551 / JCM 1027 / KCTC 2358 / NCIMB 9240 / NCTC 8049) protein is tRNA-2-methylthio-N(6)-dimethylallyladenosine synthase.